The primary structure comprises 376 residues: Probable inactive protein kinase At3g63330 (376 aa).

Residues 1-370 (MVERGPTVYL…VDEALQHPYF (370 aa)) enclose the Protein kinase domain.

The protein belongs to the protein kinase superfamily. Ser/Thr protein kinase family.

The polypeptide is Probable inactive protein kinase At3g63330 (Arabidopsis thaliana (Mouse-ear cress)).